The primary structure comprises 45 residues: Mu-conotoxin-like Cal 12.1.2d (45 aa).

4 disulfide bridges follow: C3-C16, C11-C28, C18-C33, and C27-C39. A 6'-bromotryptophan modification is found at W17. P23 carries the 4-hydroxyproline modification. Residues W37 and W38 each carry the 6'-bromotryptophan modification. The residue at position 40 (P40) is a 4-hydroxyproline.

As to expression, expressed by the venom duct.

It is found in the secreted. Its function is as follows. Mu-conotoxins block voltage-gated sodium channels. This toxin reversibly blocks voltage-gated sodium channel in cephalopods, with no alteration in the voltage dependence of sodium conductance or on the kinetics of inactivation. The sequence is that of Mu-conotoxin-like Cal 12.1.2d from Californiconus californicus (California cone).